We begin with the raw amino-acid sequence, 540 residues long: Sterol O-acyltransferase 1 (540 aa).

Residues 1–20 (MSLRNRLSKSGENPEQDEAQ) form a disordered region. Over 1–128 (MSLRNRLSKS…LDELFEVDHI (128 aa)) the chain is Cytoplasmic. Ser2 is subject to Phosphoserine. His127 contacts cholesterol. Residues 129–150 (RTIYHMFIALLILFVLSTIVVD) traverse the membrane as a helical segment. Residues 151 to 170 (YIDEGRLVLEFNLLAYAFGK) are Lumenal-facing. Residues 171-196 (FPTVIWTWWAMFLSTLSIPYFLFQRW) traverse the membrane as a helical segment. Residues 197–208 (AHGYSKSSHPLI) are Cytoplasmic-facing. A helical transmembrane segment spans residues 209–234 (YSLVHGLLFLVFQLGVLGFVPTYVVL). The Lumenal segment spans residues 235–242 (AYTLPPAS). The helical transmembrane segment at 243 to 266 (RFILILEQIRLIMKAHSFVRENIP) threads the bilayer. Topologically, residues 267–309 (RVLNAAKEKSSKDPLPTVNQYLYFLFAPTLIYRDNYPRTPTVR) are cytoplasmic. A helical transmembrane segment spans residues 310 to 342 (WGYVAMQFLQVFGCLFYVYYIFERLCAPLFRNI). At 343–359 (KQEPFSARVLVLCVFNS) the chain is on the lumenal side. A helical transmembrane segment spans residues 360-385 (ILPGVLILFLSFFAFLHCWLNAFAEM). At 386–433 (LRFGDRMFYKDWWNSTSYSNYYRTWNVVVHDWLYYYVYKDLLWFFSKR) the chain is on the cytoplasmic side. The FYXDWWN motif motif lies at 393–399 (FYKDWWN). The an acyl-CoA site is built by Asn405, Arg408, Asn411, His415, Tyr423, Lys435, and Ser446. A helical membrane pass occupies residues 434–458 (FKSAAMLAVFALSAVVHEYALAICL). His450 is an active-site residue. Over 459 to 464 (SYFYPV) the chain is Lumenal. The chain crosses the membrane as a helical span at residues 465-480 (LFVLFMFFGMAFNFIV). At 481-486 (NDSRKR) the chain is on the cytoplasmic side. The chain crosses the membrane as a helical span at residues 487–518 (PIWNIMVWASLFLGYGLILCFYSQEWYARQHC). A disulfide bridge connects residues Cys518 and Cys536. The Lumenal portion of the chain corresponds to 519–540 (PLKNPTFLDYVRPRTWTCRYVF).

Belongs to the membrane-bound acyltransferase family. Sterol o-acyltransferase subfamily. In terms of assembly, may form homo- or heterodimers. Interacts with UBIAD1.

Its subcellular location is the endoplasmic reticulum membrane. The enzyme catalyses a sterol + a long-chain fatty acyl-CoA = a long-chain 3-hydroxysterol ester + CoA. It carries out the reaction cholesterol + an acyl-CoA = a cholesterol ester + CoA. It catalyses the reaction cholesterol + (9Z)-octadecenoyl-CoA = cholesteryl (9Z-octadecenoate) + CoA. The catalysed reaction is cholesterol + hexadecanoyl-CoA = cholesteryl hexadecanoate + CoA. The enzyme catalyses octadecanoyl-CoA + cholesterol = cholesteryl octadecanoate + CoA. It carries out the reaction (9Z,12Z)-octadecadienoyl-CoA + cholesterol = cholesteryl (9Z,12Z)-octadecadienoate + CoA. It catalyses the reaction (5Z,8Z,11Z,14Z)-eicosatetraenoyl-CoA + cholesterol = cholesteryl (5Z,8Z,11Z,14Z)-eicosatetraenoate + CoA. The catalysed reaction is (9Z)-hexadecenoyl-CoA + cholesterol = cholesteryl (9Z)-hexadecenoate + CoA. The enzyme catalyses (11Z)-octadecenoyl-CoA + cholesterol = cholesteryl (11Z)-octadecenoate + CoA. It carries out the reaction (7Z)-octadecenoyl-CoA + cholesterol = cholesteryl (7Z)-octadecenoate + CoA. Its function is as follows. Catalyzes the formation of fatty acid-cholesterol esters, which are less soluble in membranes than cholesterol. Plays a role in lipoprotein assembly and dietary cholesterol absorption. Preferentially utilizes oleoyl-CoA ((9Z)-octadecenoyl-CoA) as a substrate: shows a higher activity towards an acyl-CoA substrate with a double bond at the delta-9 position (9Z) than towards saturated acyl-CoA or an unsaturated acyl-CoA with a double bond at the delta-7 (7Z) or delta-11 (11Z) positions. The chain is Sterol O-acyltransferase 1 from Mus musculus (Mouse).